A 91-amino-acid chain; its full sequence is Small ribosomal subunit protein uS15 (91 aa).

This sequence belongs to the universal ribosomal protein uS15 family. As to quaternary structure, part of the 30S ribosomal subunit. Forms a bridge to the 50S subunit in the 70S ribosome, contacting the 23S rRNA.

One of the primary rRNA binding proteins, it binds directly to 16S rRNA where it helps nucleate assembly of the platform of the 30S subunit by binding and bridging several RNA helices of the 16S rRNA. Functionally, forms an intersubunit bridge (bridge B4) with the 23S rRNA of the 50S subunit in the ribosome. The sequence is that of Small ribosomal subunit protein uS15 from Synechococcus sp. (strain JA-2-3B'a(2-13)) (Cyanobacteria bacterium Yellowstone B-Prime).